A 213-amino-acid chain; its full sequence is Thymidylate kinase (213 aa).

Residue 10-17 coordinates ATP; sequence GLEGAGKT.

This sequence belongs to the thymidylate kinase family.

It carries out the reaction dTMP + ATP = dTDP + ADP. In terms of biological role, phosphorylation of dTMP to form dTDP in both de novo and salvage pathways of dTTP synthesis. This is Thymidylate kinase from Escherichia coli O6:H1 (strain CFT073 / ATCC 700928 / UPEC).